The following is a 407-amino-acid chain: O-antigen polymerase (407 aa).

11 helical membrane passes run 2 to 22 (LIIS…TLSV), 31 to 51 (VMVP…GIFV), 63 to 83 (YLFF…SYLY), 101 to 121 (YVFT…PVLM), 141 to 161 (YGIY…CAFF), 168 to 185 (LFCI…FLHG), 190 to 204 (IFSI…LSYI), 211 to 231 (FMFL…FFAY), 319 to 339 (ADFG…KGVL), 356 to 376 (FIMF…GWLF), and 382 to 402 (IAFM…RFVL).

Its subcellular location is the cell inner membrane. It carries out the reaction n lipid-linked O-antigen repeat units = a lipid-linked O antigen + (n-1) polyisoprenyl diphosphate.. The protein operates within bacterial outer membrane biogenesis; LPS O-antigen biosynthesis. In terms of biological role, polymerase involved in the biosynthesis of the lipopolysaccharide (LPS). Catalyzes the polymerization of the O-antigen repeat units on the periplasmic face of the inner membrane, leading to the formation of the lipid-linked O-antigen molecule. In Salmonella typhi, this protein is O-antigen polymerase (rfc).